Reading from the N-terminus, the 225-residue chain is Tryptophan synthase beta chain (225 aa).

This sequence belongs to the TrpB family. As to quaternary structure, tetramer of two alpha and two beta chains. It depends on pyridoxal 5'-phosphate as a cofactor.

The catalysed reaction is (1S,2R)-1-C-(indol-3-yl)glycerol 3-phosphate + L-serine = D-glyceraldehyde 3-phosphate + L-tryptophan + H2O. It participates in amino-acid biosynthesis; L-tryptophan biosynthesis; L-tryptophan from chorismate: step 5/5. In terms of biological role, the beta subunit is responsible for the synthesis of L-tryptophan from indole and L-serine. This Buchnera aphidicola subsp. Rhopalosiphum maidis protein is Tryptophan synthase beta chain (trpB).